A 54-amino-acid chain; its full sequence is Ovomucoid (54 aa).

The Kazal-like domain maps to 4–54 (VDCSDYPKPSCTLEDKPLCGSDNQTYSNKCSFCNAVVDSNGTLTLSHFGKC). 3 disulfide bridges follow: Cys-6/Cys-36, Cys-14/Cys-33, and Cys-22/Cys-54. The N-linked (GlcNAc...) asparagine glycan is linked to Asn-43.

The protein resides in the secreted. The protein is Ovomucoid of Megapodius freycinet (Dusky scrubfowl).